The chain runs to 282 residues: Probable protein phosphatase 2C 45 (282 aa).

One can recognise a PPM-type phosphatase domain in the interval 27-272 (SYGYASSPGK…DNITCVVVRF (246 aa)). Residues Asp-63, Gly-64, Asp-224, and Asp-263 each contribute to the Mn(2+) site.

The protein belongs to the PP2C family. Requires Mg(2+) as cofactor. Mn(2+) serves as cofactor.

The catalysed reaction is O-phospho-L-seryl-[protein] + H2O = L-seryl-[protein] + phosphate. It carries out the reaction O-phospho-L-threonyl-[protein] + H2O = L-threonyl-[protein] + phosphate. This Oryza sativa subsp. japonica (Rice) protein is Probable protein phosphatase 2C 45.